Reading from the N-terminus, the 227-residue chain is 7-cyano-7-deazaguanine synthase (227 aa).

Phenylalanine 16–leucine 26 provides a ligand contact to ATP. The Zn(2+) site is built by cysteine 194, cysteine 202, cysteine 205, and cysteine 208.

This sequence belongs to the QueC family. Requires Zn(2+) as cofactor.

The catalysed reaction is 7-carboxy-7-deazaguanine + NH4(+) + ATP = 7-cyano-7-deazaguanine + ADP + phosphate + H2O + H(+). The protein operates within purine metabolism; 7-cyano-7-deazaguanine biosynthesis. In terms of biological role, catalyzes the ATP-dependent conversion of 7-carboxy-7-deazaguanine (CDG) to 7-cyano-7-deazaguanine (preQ(0)). This chain is 7-cyano-7-deazaguanine synthase, found in Haemophilus influenzae (strain PittEE).